The chain runs to 444 residues: MGGPRAWTLLCLGLLLPGGGAAWSVPGARFSGRRNWCSYVVTRTVSCHVQNGTYLQRVLQNCPWPMGCPGNSYRTVVRPLYKVTYKTVTAREWRCCPGHSGVTCEEGSPGLLEPTWTDSGMRRMAVRPTALSGCLNCSKVSELTERLKALEAKVAVLSVTEQTVPSVPATPEDSALLWGSPAARGSPGDGSLQDRLDSWGLPGPTGPKGGTDSQSPVRIRGPPGPQGPPGRPGQTGAAGTPGKMGPPGPPGPPGPPGPPAPVGPPYGQVSLHGDPLLSNTFTEMGSHWPQGPTGPPGPPGPPGPMGPPGLPGPMGAPGSPGHMGIPGPSGPKGTSGHPGEKGERGLPGEPGPQGLMGVPGEPGPKGDPGEKSHWGEGLHQLREALKILAERVLILETMIGLYEPDLGSGAGPDGTGTPSLLRGKRGGHPTNYPIITPRRRSERS.

A signal peptide spans 1–22 (MGGPRAWTLLCLGLLLPGGGAA). An EMI domain is found at 33–106 (RRNWCSYVVT…PGHSGVTCEE (74 aa)). Intrachain disulfides connect cysteine 37–cysteine 96, cysteine 62–cysteine 68, and cysteine 95–cysteine 104. A glycan (O-linked (Fuc) threonine) is linked at threonine 42. The N-linked (GlcNAc...) asparagine glycan is linked to asparagine 51. N-linked (GlcNAc...) asparagine glycosylation occurs at asparagine 136. Disordered regions lie at residues 161 to 374 (EQTV…KSHW) and 404 to 444 (PDLG…SERS). Residues 221-371 (GPPGPQGPPG…PGPKGDPGEK (151 aa)) enclose the Collagen-like domain. Over residues 222 to 231 (PPGPQGPPGR) the composition is skewed to pro residues. Residues 232-243 (PGQTGAAGTPGK) are compositionally biased toward low complexity. 2 stretches are compositionally biased toward pro residues: residues 244 to 264 (MGPP…PVGP) and 292 to 311 (PTGP…PGLP).

Homo- or heteromers. O-fucosylated at Thr-42 within the EMI domain by FUT10/POFUT3 and FUT11/POFUT4.

Its subcellular location is the secreted. The protein resides in the extracellular space. It is found in the extracellular matrix. This is EMI domain-containing protein 1 (Emid1) from Mus musculus (Mouse).